A 397-amino-acid chain; its full sequence is Mannonate dehydratase (397 aa).

The protein belongs to the mannonate dehydratase family. Fe(2+) is required as a cofactor. Requires Mn(2+) as cofactor.

It carries out the reaction D-mannonate = 2-dehydro-3-deoxy-D-gluconate + H2O. It participates in carbohydrate metabolism; pentose and glucuronate interconversion. Its function is as follows. Catalyzes the dehydration of D-mannonate. This chain is Mannonate dehydratase, found in Yersinia pseudotuberculosis serotype O:1b (strain IP 31758).